We begin with the raw amino-acid sequence, 93 residues long: Cell division protein FtsB (93 aa).

Residues 1–3 (MRL) are Cytoplasmic-facing. Residues 4–21 (FILVLTLLFGWLQYTLWF) traverse the membrane as a helical segment. Residues 22–93 (GKNGVSDYYT…FYRIVGEENQ (72 aa)) lie on the Periplasmic side of the membrane. Residues 42–75 (VNTKLQARNSEMYAEIDDLKQGLDAIEERARHEL) adopt a coiled-coil conformation.

It belongs to the FtsB family. In terms of assembly, part of a complex composed of FtsB, FtsL and FtsQ.

Its subcellular location is the cell inner membrane. In terms of biological role, essential cell division protein. May link together the upstream cell division proteins, which are predominantly cytoplasmic, with the downstream cell division proteins, which are predominantly periplasmic. The sequence is that of Cell division protein FtsB from Vibrio vulnificus (strain YJ016).